The sequence spans 162 residues: Retinoic acid receptor responder protein 2 (162 aa).

The signal sequence occupies residues 1-20 (MKCLLISLALWLGTVGTRGT). 3 disulfides stabilise this stretch: Cys-79/Cys-89, Cys-100/Cys-119, and Cys-103/Cys-134. Positions 157-162 (RALRTK) are excised as a propeptide.

In terms of processing, secreted in an inactive precursor form, prochemerin, which is proteolytically processed by a variety of extracellular proteases to generate forms with differing levels of bioactivity. For example, the removal of six amino acids results in chemerin-156, which exhibits the highest activity, while removal of seven amino acids results in chemerin-155 which has slightly less activity. Some proteases are able to cleave at more than one site and chemerin forms may be sequentially processed by different enzymes to modulate activity levels. The coordinated expression and activity of chemerin-modifying enzymes is essential for regulating its bioactivation, inactivation and, consequently, biological function. Cathepsin G cleaves seven C-terminal amino acids from prochemerin (chemerin-155), elastase is able to cleave six (chemerin-156), eight (chemerin-154) or eleven (chemerin-151), plasmin cleaves five amino acids (chemerin-157), and tryptase cleaves five (chemerin-157) or eight (chemerin-154). Multiple cleavages might be required to fully activate chemerin, with an initial tryptase cleavage resulting in chemerin with low activity (chemerin-157), and a second cleavage by carboxypeptidase N or B producing highly active chemerin (chemerin-156). Expressed in the differentiated adipocytes (at protein level). Abundantly expressed in the liver, adipose tissue including visceral, epididymal, and brown adipose tissue.

The protein resides in the secreted. In terms of biological role, adipocyte-secreted protein (adipokine) that regulates adipogenesis, metabolism and inflammation through activation of the chemokine-like receptor 1 (CMKLR1). Also acts as a ligand for CMKLR2. Can also bind to C-C chemokine receptor-like 2 (CCRL2), but with a lower affinity than it does to CMKLR1 or CMKLR2. Positively regulates adipocyte differentiation, modulates the expression of adipocyte genes involved in lipid and glucose metabolism and might play a role in angiogenesis, a process essential for the expansion of white adipose tissue. Also acts as a pro-inflammatory adipokine, causing an increase in secretion of pro-inflammatory and prodiabetic adipokines, which further impair adipose tissue metabolic function and have negative systemic effects including impaired insulin sensitivity, altered glucose and lipid metabolism, and a decrease in vascular function in other tissues. Can have both pro- and anti-inflammatory properties depending on the modality of enzymatic cleavage by different classes of proteases. Acts as a chemotactic factor for leukocyte populations expressing CMKLR1, particularly immature plasmacytoid dendritic cells, but also immature myeloid DCs, macrophages and natural killer cells. Exerts an anti-inflammatory role by preventing TNF/TNFA-induced VCAM1 expression and monocytes adhesion in vascular endothelial cells. The effect is mediated via inhibiting activation of NF-kappa-B and CRK/p38 through stimulation of AKT1/NOS3 signaling and nitric oxide production. Exhibits an antimicrobial function in the skin. The sequence is that of Retinoic acid receptor responder protein 2 (Rarres2) from Mus musculus (Mouse).